The following is a 330-amino-acid chain: Malate dehydrogenase (330 aa).

NAD(+) is bound at residue 12 to 18; the sequence is GAAGQIG. Substrate contacts are provided by Arg93 and Arg99. NAD(+) is bound by residues Asn106, Gln113, and 130–132; that span reads VGN. Residues Asn132 and Arg163 each coordinate substrate. Catalysis depends on His188, which acts as the Proton acceptor.

The protein belongs to the LDH/MDH superfamily. MDH type 2 family.

It catalyses the reaction (S)-malate + NAD(+) = oxaloacetate + NADH + H(+). Functionally, catalyzes the reversible oxidation of malate to oxaloacetate. This Legionella pneumophila (strain Lens) protein is Malate dehydrogenase.